Reading from the N-terminus, the 413-residue chain is Arginine biosynthesis bifunctional protein ArgJ (413 aa).

Substrate contacts are provided by Thr-160, Lys-186, Thr-197, Glu-284, Asn-408, and Ser-413. Thr-197 (nucleophile) is an active-site residue.

This sequence belongs to the ArgJ family. In terms of assembly, heterotetramer of two alpha and two beta chains.

The protein localises to the cytoplasm. The enzyme catalyses N(2)-acetyl-L-ornithine + L-glutamate = N-acetyl-L-glutamate + L-ornithine. It catalyses the reaction L-glutamate + acetyl-CoA = N-acetyl-L-glutamate + CoA + H(+). It participates in amino-acid biosynthesis; L-arginine biosynthesis; L-ornithine and N-acetyl-L-glutamate from L-glutamate and N(2)-acetyl-L-ornithine (cyclic): step 1/1. It functions in the pathway amino-acid biosynthesis; L-arginine biosynthesis; N(2)-acetyl-L-ornithine from L-glutamate: step 1/4. In terms of biological role, catalyzes two activities which are involved in the cyclic version of arginine biosynthesis: the synthesis of N-acetylglutamate from glutamate and acetyl-CoA as the acetyl donor, and of ornithine by transacetylation between N(2)-acetylornithine and glutamate. The protein is Arginine biosynthesis bifunctional protein ArgJ of Burkholderia pseudomallei (strain K96243).